The primary structure comprises 1034 residues: DNA polymerase I B, chloroplastic/mitochondrial (1034 aa).

Residues 1–55 (MGVSLRHLSPSSFWVSRRPRVSSSILSFLVPRRRILCTRKVAIIKGNAGYSTATD) constitute a chloroplast and mitochondrion transit peptide. The region spanning 270-468 (ACDTEVSRID…LYESMKKQLQ (199 aa)) is the 3'-5' exonuclease domain. Positions 700-1030 (HAIAALCEVC…SVDAKCAQNW (331 aa)) are polymerase.

Belongs to the DNA polymerase type-A family. As to expression, expressed in shoot apical meristem.

Its subcellular location is the mitochondrion. It localises to the plastid. It is found in the chloroplast. The enzyme catalyses DNA(n) + a 2'-deoxyribonucleoside 5'-triphosphate = DNA(n+1) + diphosphate. Its activity is regulated as follows. Not inhibited by aphidicolin. Functionally, in addition to polymerase activity, this DNA polymerase exhibits 5'-3' exonuclease activity. Required for DNA replication and accumulation in plastids and mitochondria. The protein is DNA polymerase I B, chloroplastic/mitochondrial (POLIB) of Arabidopsis thaliana (Mouse-ear cress).